The following is a 151-amino-acid chain: Large ribosomal subunit protein bL9 (151 aa).

Belongs to the bacterial ribosomal protein bL9 family.

In terms of biological role, binds to the 23S rRNA. The protein is Large ribosomal subunit protein bL9 of Chloroherpeton thalassium (strain ATCC 35110 / GB-78).